We begin with the raw amino-acid sequence, 187 residues long: dTTP/UTP pyrophosphatase (187 aa).

The active-site Proton acceptor is the aspartate 72.

This sequence belongs to the Maf family. YhdE subfamily. It depends on a divalent metal cation as a cofactor.

It localises to the cytoplasm. The enzyme catalyses dTTP + H2O = dTMP + diphosphate + H(+). It catalyses the reaction UTP + H2O = UMP + diphosphate + H(+). Nucleoside triphosphate pyrophosphatase that hydrolyzes dTTP and UTP. May have a dual role in cell division arrest and in preventing the incorporation of modified nucleotides into cellular nucleic acids. The chain is dTTP/UTP pyrophosphatase from Vibrio cholerae serotype O1 (strain ATCC 39315 / El Tor Inaba N16961).